The sequence spans 855 residues: Alanine--tRNA ligase (855 aa).

Zn(2+) contacts are provided by histidine 555, histidine 559, cysteine 657, and histidine 661.

This sequence belongs to the class-II aminoacyl-tRNA synthetase family. Requires Zn(2+) as cofactor.

It localises to the cytoplasm. The catalysed reaction is tRNA(Ala) + L-alanine + ATP = L-alanyl-tRNA(Ala) + AMP + diphosphate. Functionally, catalyzes the attachment of alanine to tRNA(Ala) in a two-step reaction: alanine is first activated by ATP to form Ala-AMP and then transferred to the acceptor end of tRNA(Ala). Also edits incorrectly charged Ser-tRNA(Ala) and Gly-tRNA(Ala) via its editing domain. This Wolinella succinogenes (strain ATCC 29543 / DSM 1740 / CCUG 13145 / JCM 31913 / LMG 7466 / NCTC 11488 / FDC 602W) (Vibrio succinogenes) protein is Alanine--tRNA ligase.